The following is a 144-amino-acid chain: Nucleoside diphosphate kinase (144 aa).

6 residues coordinate ATP: Lys11, Phe59, Arg87, Thr93, Arg104, and Asn114. His117 functions as the Pros-phosphohistidine intermediate in the catalytic mechanism.

Belongs to the NDK family. In terms of assembly, homotetramer. Mg(2+) is required as a cofactor.

The protein localises to the cytoplasm. The enzyme catalyses a 2'-deoxyribonucleoside 5'-diphosphate + ATP = a 2'-deoxyribonucleoside 5'-triphosphate + ADP. The catalysed reaction is a ribonucleoside 5'-diphosphate + ATP = a ribonucleoside 5'-triphosphate + ADP. Functionally, major role in the synthesis of nucleoside triphosphates other than ATP. The ATP gamma phosphate is transferred to the NDP beta phosphate via a ping-pong mechanism, using a phosphorylated active-site intermediate. The chain is Nucleoside diphosphate kinase from Vibrio atlanticus (strain LGP32) (Vibrio splendidus (strain Mel32)).